The primary structure comprises 1061 residues: Ceruloplasmin (1061 aa).

The first 19 residues, 1 to 19 (MKFLLLSTFIFLYSSLALA), serve as a signal peptide directing secretion. Plastocyanin-like domains lie at 20–199 (RDKH…LILC), 208–356 (KEKN…VRDC), 369–555 (HVRH…MKIC), 565–713 (RQKD…VNQC), 725–895 (GERT…LIVC), and 903–1057 (FSPK…VEQE). Residues Tyr-55, Gly-64, and Tyr-67 each contribute to the Na(+) site. Cu(2+)-binding residues include His-120 and His-122. His-120 lines the O2 pocket. Ca(2+) is bound at residue Lys-128. Residue Asn-138 is glycosylated (N-linked (GlcNAc...) asparagine). Positions 143, 146, and 147 each coordinate Ca(2+). Cys-173 and Cys-199 form a disulfide bridge. The Cu(2+) site is built by His-179 and His-181. His-179 is a binding site for O2. N-linked (GlcNAc...) asparagine glycosylation is present at Asn-226. Ser-255 provides a ligand contact to Na(+). Cys-275 and Cys-356 are disulfide-bonded. Positions 294, 337, and 342 each coordinate Cu(2+). Asn-396 is a glycosylation site (N-linked (GlcNAc...) asparagine). Na(+) contacts are provided by Phe-407, Gly-416, and Tyr-419. Cys-529 and Cys-555 are oxidised to a cystine. Residue Asn-583 is glycosylated (N-linked (GlcNAc...) asparagine). Na(+) is bound at residue Ser-612. Cys-632 and Cys-713 are joined by a disulfide. Cu(2+) is bound by residues His-651, Cys-694, His-699, and Met-704. Residue Cys-694 is the Nucleophile; for glutathione peroxidase activity of the active site. An N-linked (GlcNAc...) asparagine glycan is attached at Asn-757. Phe-762, Gly-771, and Tyr-774 together coordinate Na(+). A disulfide bridge connects residues Cys-869 and Cys-895. N-linked (GlcNAc...) asparagine glycosylation is present at Asn-921. Ser-950 contributes to the Na(+) binding site. The Cu(2+) site is built by His-989, His-992, His-994, His-1034, Cys-1035, His-1036, His-1040, and Met-1045. O2 is bound by residues His-992 and His-994. Residue His-1036 coordinates O2.

Belongs to the multicopper oxidase family. Found in a complex with MPO and LTF; interacts directly with MPO and LTF, which allows Fe(3+) incorporation into LTF, activation of CP ferroxidase activity and protection of CP antioxidant properties by MPO. Requires Cu(2+) as cofactor. In terms of tissue distribution, expressed in many tissues, including liver, eye and brain.

The protein localises to the secreted. The enzyme catalyses 4 Fe(2+) + O2 + 4 H(+) = 4 Fe(3+) + 2 H2O. It catalyses the reaction 4 Cu(+) + O2 + 4 H(+) = 4 Cu(2+) + 2 H2O. It carries out the reaction a hydroperoxide + 2 glutathione = an alcohol + glutathione disulfide + H2O. The catalysed reaction is 4 nitric oxide + O2 + 2 H2O = 4 nitrite + 4 H(+). The enzyme catalyses 2 glutathione + H2O2 = glutathione disulfide + 2 H2O. In terms of biological role, multifunctional blue, copper-binding (6-7 atoms per molecule) glycoprotein. It has ferroxidase activity oxidizing Fe(2+) to Fe(3+) without releasing radical oxygen species. It is involved in iron transport across the cell membrane. Copper ions provide a large number of enzymatic activites. Oxidizes highly toxic ferrous ions to the ferric state for further incorporation onto apo-transferrins, catalyzes Cu(+) oxidation and promotes the oxidation of biogenic amines such as norepinephrin and serotonin. Provides Cu(2+) ions for the ascorbate-mediated deaminase degradation of the heparan sulfate chains of GPC1. Has glutathione peroxidase-like activity, can remove both hydrogen peroxide and lipid hydroperoxide in the presence of thiols. Also shows NO-oxidase and NO2 synthase activities that determine endocrine NO homeostasis. The chain is Ceruloplasmin (Cp) from Mus musculus (Mouse).